Reading from the N-terminus, the 248-residue chain is Probable transcriptional regulatory protein Noc_0137 (248 aa).

The protein belongs to the TACO1 family.

The protein localises to the cytoplasm. This chain is Probable transcriptional regulatory protein Noc_0137, found in Nitrosococcus oceani (strain ATCC 19707 / BCRC 17464 / JCM 30415 / NCIMB 11848 / C-107).